Here is a 477-residue protein sequence, read N- to C-terminus: MTSPDTQTSSLYAKREPVFPKRVSGKFRSLKWWIMGVTLGIYYIAPWLRWDRGPNLPDQAILVDLANRRFFFFMIEIWPHEFYFVAGLLIMAGLGLFLFTSAAGRVWCGYACPQTVWTDLFILVERWVEGDRNARIRLLRQRWDLEKTRKYLTKWTLWLLIGLATGGAWVFYFTDAPTLLVDLLTGNAHPVAYITMATLTATTFAFGGFAREQICIYACPWPRIQAAMMDEETITVAYREWRGEPRGKLKKGEPLSPDQGDCIDCMACVNVCPMGIDIRDGQQLACITCALCIDACDEVMDKIGKPRGLIGYLALTDERAEREGRSPRSAWRHVFRLRTLIYTALWSGVGLALIVALFLRSPIDINVTPLRNPLYVTLSDGSIRNTYDVRLRNKQGEARDYQISVTSEADLALSLEGHPATVVTVPANETMTQRVYIIAGKGTPAAEAERTDLRLWVEDLAAGQRVHHDTIFNGRGN.

At M1 to S29 the chain is on the cytoplasmic side. Residues L30–W50 form a helical membrane-spanning segment. Over D51–E81 the chain is Periplasmic. Residues F82–A102 form a helical membrane-spanning segment. Residues A103 to K154 are Cytoplasmic-facing. Residues W155–D175 traverse the membrane as a helical segment. The Periplasmic segment spans residues A176–H189. A helical membrane pass occupies residues P190–A210. The Cytoplasmic segment spans residues R211–R338. The region spanning E253–G281 is the 4Fe-4S ferredoxin-type domain. Residues C262, C265, C268, C272, C286, C289, C292, and C296 each contribute to the [4Fe-4S] cluster site. A helical transmembrane segment spans residues T339 to L359. The Periplasmic segment spans residues R360 to N477.

[4Fe-4S] cluster serves as cofactor.

Its subcellular location is the cell membrane. Functionally, involved in a membrane generated redox signal; required to maintain repression of photosynthesis gene expression in the presence of oxygen. This Cereibacter sphaeroides (strain ATCC 17023 / DSM 158 / JCM 6121 / CCUG 31486 / LMG 2827 / NBRC 12203 / NCIMB 8253 / ATH 2.4.1.) (Rhodobacter sphaeroides) protein is Protein RdxB (rdxB).